The sequence spans 270 residues: MGGQVRVAIVGAGGRMGRTLIESAYHQEHIRLGAAIERPGSSLVGVDAGELVGVGKLNVIIMDSLDYATDDFDVLIDFTAPEASIVHLDWCVRHKKAMVIGTTGFNHAQKEQINAFAEQTPVVMAPNMSVGVNLMWKLLELAAEVMGDYTDIEIIEGHHRYKKDAPSGTALKMGEVIAKTLGRDLEKCAVYGREGITGERDRETIGFATVRAGDLVGEHTAMFADIGERLEITHKASSRMTFANGAMRAAHWLVEQKPGLYDMQQVLGLN.

NAD(+) contacts are provided by residues 11-16 (GAGGRM) and Glu37. Position 38 (Arg38) interacts with NADP(+). Residues 101-103 (GTT) and 125-128 (APNM) each bind NAD(+). Residue His158 is the Proton donor/acceptor of the active site. His159 provides a ligand contact to (S)-2,3,4,5-tetrahydrodipicolinate. Residue Lys162 is the Proton donor of the active site. 168–169 (GT) is a binding site for (S)-2,3,4,5-tetrahydrodipicolinate.

It belongs to the DapB family.

The protein resides in the cytoplasm. It carries out the reaction (S)-2,3,4,5-tetrahydrodipicolinate + NAD(+) + H2O = (2S,4S)-4-hydroxy-2,3,4,5-tetrahydrodipicolinate + NADH + H(+). The catalysed reaction is (S)-2,3,4,5-tetrahydrodipicolinate + NADP(+) + H2O = (2S,4S)-4-hydroxy-2,3,4,5-tetrahydrodipicolinate + NADPH + H(+). Its pathway is amino-acid biosynthesis; L-lysine biosynthesis via DAP pathway; (S)-tetrahydrodipicolinate from L-aspartate: step 4/4. Catalyzes the conversion of 4-hydroxy-tetrahydrodipicolinate (HTPA) to tetrahydrodipicolinate. This chain is 4-hydroxy-tetrahydrodipicolinate reductase, found in Shewanella sp. (strain ANA-3).